The following is a 691-amino-acid chain: MARKTPLHMVRNIGIAAHIDAGKTTTSERILFFTGISHKIGETHEGTATMDWMDQEKERGITITSAATTCFWRDHQINLIDTPGHVDFTIEVERSMRVLDGAVAVFCSVGGVQPQSETVWRQANKYHVPRIAFVNKMDRVGANFYNVEKQIKDRLKANPVPLQIPIGAEDNFKGVVDLIQMKALVWESDEPTNYVVKDIPADLQDKAKEYHDKLVEAVAETDEKLMEKFFDGVELSIDEIKKGIKTATLSLNIVPMLCGTAFKNKGVQPLLDAVVDYLPAPDEVPNIKGQYENGKEVSVESTDDGEFAALGFKIATDPFVGQLTFVRVYRGVLASGSYVYNAGKGKKERVGRILRMHSNKREEIKELYAGEIGAVVGLKDTLTGDTLASEKDPVILERMEFPDPVISVAVEPKTKADQEKMGIALQKLAQEDPSFRVATDEESGQTIISGMGELHLEIIVDRMLREFKVEAEVGKPQVAYRETIRKTVEQEYKYAKQSGGRGQYGHVFLRLEPMEPGGENYEFVNDIKGGAVPKEYIPAVDKGCQEAMQSGVLAGYPVVDIKVTLFDGSYHEVDSSEMAFKLAASMGFKEGARKANAVILEPMMKVEVETPEEYMGDVIGDLNKRRGQVNNMSDRGGNKIIDAFCPLAEMFGYSTDLRSQTQGRATYSMEFDHYDEVPRNVSEEIIKKRNG.

Positions 8–282 (HMVRNIGIAA…AVVDYLPAPD (275 aa)) constitute a tr-type G domain. Residues 17 to 24 (AHIDAGKT), 81 to 85 (DTPGH), and 135 to 138 (NKMD) contribute to the GTP site.

It belongs to the TRAFAC class translation factor GTPase superfamily. Classic translation factor GTPase family. EF-G/EF-2 subfamily.

Its subcellular location is the cytoplasm. Catalyzes the GTP-dependent ribosomal translocation step during translation elongation. During this step, the ribosome changes from the pre-translocational (PRE) to the post-translocational (POST) state as the newly formed A-site-bound peptidyl-tRNA and P-site-bound deacylated tRNA move to the P and E sites, respectively. Catalyzes the coordinated movement of the two tRNA molecules, the mRNA and conformational changes in the ribosome. The protein is Elongation factor G of Campylobacter hominis (strain ATCC BAA-381 / DSM 21671 / CCUG 45161 / LMG 19568 / NCTC 13146 / CH001A).